Here is a 326-residue protein sequence, read N- to C-terminus: MASLRLFSTNHQSLLLPSSLSQKTLISSPRFVNNPSRRSPIRSVLQFNRKPELAGETPRIVVITSGKGGVGKTTTTANVGLSLARYGFSVVAIDADLGLRNLDLLLGLENRVNYTCVEVINGDCRLDQALVRDKRWSNFELLCISKPRSKLPMGFGGKALEWLVDALKTRPEGSPDFIIIDCPAGIDAGFITAITPANEAVLVTTPDITALRDADRVTGLLECDGIRDIKMIVNRVRTDMIKGEDMMSVLDVQEMLGLSLLGVIPEDSEVIRSTNRGFPLVLNKPPTLAGLAFEQAAWRLVEQDSMKAVMVEEEPKKRGFFSFFGG.

Residues 1–62 (MASLRLFSTN…LAGETPRIVV (62 aa)) constitute a chloroplast transit peptide. Residue 67–74 (KGGVGKTT) participates in ATP binding.

This sequence belongs to the ParA family. MinD subfamily. Homodimer. Interacts with MINE1. Binds to ARC3. Interacts with MCD1. Interacts with CDP1/PARC6.

It is found in the plastid. It localises to the chloroplast inner membrane. Its activity is regulated as follows. Stimulated ATPase activity by MINE1. Its function is as follows. Together with ARC3 and MCD1, regulates FtsZ ring positioning in chloroplasts in an ARC6-dependent manner. Calcium-dependent ATPase required for the correct placement of the plastid division site. Inhibits FtsZ filament and ring formation in the plastid. Mediates inhibition of plastid division. In cooperation with MINE1, prevents FtsZ ring formation anywhere outside of the mid-plastids. This chain is Septum site-determining protein minD homolog, chloroplastic, found in Arabidopsis thaliana (Mouse-ear cress).